Consider the following 902-residue polypeptide: Glutamate receptor 4 (902 aa).

The N-terminal stretch at 1-20 is a signal peptide; that stretch reads MRIICRQIVLLFSGFWGLAM. At 22 to 544 the chain is on the extracellular side; it reads AFPSSVQIGG…GVFSFLDPLA (523 aa). N-linked (GlcNAc...) asparagine glycans are attached at residues N52, N56, N258, N371, N407, and N414. C84 and C331 are disulfide-bonded. 3 residues coordinate L-glutamate: P500, T502, and R507. Residues 545–565 form a helical membrane-spanning segment; it reads YEIWMCIVFAYIGVSVVLFLV. At 566 to 592 the chain is on the cytoplasmic side; sequence SRFSPYEWHTEEPEDGKEGPSDQPPNE. The helical; Pore-forming intramembrane region spans 593-608; it reads FGIFNSLWFSLGAFMQ. Residues 609-611 lie within the membrane without spanning it; sequence QGC. Residue C611 is the site of S-palmitoyl cysteine attachment. The Cytoplasmic portion of the chain corresponds to 612–617; the sequence is DISPRS. A helical membrane pass occupies residues 618 to 638; it reads LSGRIVGGVWWFFTLIIISSY. The Extracellular segment spans residues 639–813; sequence TANLAAFLTV…DKTSALSLSN (175 aa). Residues S676, T677, and E727 each contribute to the L-glutamate site. A disulfide bridge links C740 with C795. The chain crosses the membrane as a helical span at residues 814–834; it reads VAGVFYILVGGLGLAMLVALI. The Cytoplasmic portion of the chain corresponds to 835–902; that stretch reads EFCYKSRAEA…GLAVIASDLP (68 aa). Residue C837 is the site of S-palmitoyl cysteine attachment. Position 862 is a phosphoserine; by PKC/PRKCG (S862).

It belongs to the glutamate-gated ion channel (TC 1.A.10.1) family. GRIA4 subfamily. Homotetramer or heterotetramer of pore-forming glutamate receptor subunits. Tetramers may be formed by the dimerization of dimers. Interacts with EPB41L1 via its C-terminus. Isoform 3 interacts with PICK1. Found in a complex with GRIA1, GRIA2, GRIA3, CNIH2, CNIH3, CACNG2, CACNG3, CACNG4, CACNG5, CACNG7 and CACNG8. Interacts with CACNG5 and PRKCG. Found in a complex with GRIA1, GRIA2, GRIA3, DLG4, CACNG8 and CNIH2. Palmitoylated. Depalmitoylated upon L-glutamate stimulation. ZDHHC3/GODZ specifically palmitoylates Cys-611, which leads to Golgi retention and decreased cell surface expression. In contrast, Cys-837 palmitoylation does not affect cell surface expression but regulates stimulation-dependent endocytosis. In terms of processing, phosphorylated at Ser-862 by PRKCG; phosphorylation increases plasma membrane-associated GRI4 expression. As to expression, detected in cerebellum.

The protein resides in the cell membrane. The protein localises to the postsynaptic cell membrane. It is found in the cell projection. Its subcellular location is the dendrite. It catalyses the reaction Ca(2+)(in) = Ca(2+)(out). It carries out the reaction Na(+)(in) = Na(+)(out). The catalysed reaction is Mg(2+)(in) = Mg(2+)(out). In terms of biological role, ionotropic glutamate receptor that functions as a ligand-gated cation channel, gated by L-glutamate and glutamatergic agonists such as alpha-amino-3-hydroxy-5-methyl-4-isoxazolepropionic acid (AMPA), quisqualic acid, and kainic acid. L-glutamate acts as an excitatory neurotransmitter at many synapses in the central nervous system and plays an important role in fast excitatory synaptic transmission. Binding of the excitatory neurotransmitter L-glutamate induces a conformation change, leading to the opening of the cation channel, and thereby converts the chemical signal to an electrical impulse upon entry of monovalent and divalent cations such as sodium and calcium. The receptor then desensitizes rapidly and enters a transient inactive state, characterized by the presence of bound agonist. In the presence of CACNG8, shows resensitization which is characterized by a delayed accumulation of current flux upon continued application of L-glutamate. The polypeptide is Glutamate receptor 4 (Rattus norvegicus (Rat)).